The following is a 655-amino-acid chain: p-hydroxybenzoic acid efflux pump subunit AaeB (655 aa).

Residues Met1–Arg12 are Periplasmic-facing. The helical transmembrane segment at Phe13–Leu33 threads the bilayer. Over Glu34–Arg37 the chain is Cytoplasmic. Residues Trp38 to Pro58 traverse the membrane as a helical segment. The Periplasmic portion of the chain corresponds to Tyr59–Phe68. Residues Leu69–Ile89 form a helical membrane-spanning segment. Over Arg90–Pro92 the chain is Cytoplasmic. The chain crosses the membrane as a helical span at residues Leu93–Val113. Topologically, residues Arg114–Ala120 are periplasmic. The helical transmembrane segment at Trp121 to Leu141 threads the bilayer. The Cytoplasmic segment spans residues Thr142 to Ser151. Residues Glu152–Ile172 traverse the membrane as a helical segment. Residues Lys173–Thr369 are Periplasmic-facing. Residues Leu370–Val390 form a helical membrane-spanning segment. Residues Thr391–Asp406 lie on the Cytoplasmic side of the membrane. Residues Phe407–Pro427 form a helical membrane-spanning segment. Topologically, residues Asn428–Gln430 are periplasmic. The chain crosses the membrane as a helical span at residues Gln431–Val451. At Gln452 to Ser458 the chain is on the cytoplasmic side. Residues Met459–Phe479 form a helical membrane-spanning segment. The Periplasmic segment spans residues Ser480–Gln481. A helical transmembrane segment spans residues Phe482–Leu502. Over Val503–Ser655 the chain is Cytoplasmic.

This sequence belongs to the aromatic acid exporter ArAE (TC 2.A.85) family.

The protein resides in the cell inner membrane. In terms of biological role, forms an efflux pump with AaeA. Could function as a metabolic relief valve, allowing to eliminate certain compounds when they accumulate to high levels in the cell. This chain is p-hydroxybenzoic acid efflux pump subunit AaeB, found in Shigella flexneri.